The primary structure comprises 568 residues: Potassium-transporting ATPase potassium-binding subunit (568 aa).

10 helical membrane-spanning segments follow: residues 3 to 23 (TEVL…YPLG), 68 to 88 (LLVV…TQGV), 133 to 153 (FVIM…MAGI), 180 to 200 (LLPL…PMGF), 256 to 276 (VECW…GFYL), 281 to 301 (LGYS…CINV), 375 to 395 (FGGV…AVFI), 421 to 441 (IVAL…AYLF), 497 to 517 (IVLI…AGIL), and 535 to 555 (VTFG…SFFP).

It belongs to the KdpA family. In terms of assembly, the system is composed of three essential subunits: KdpA, KdpB and KdpC.

The protein localises to the cell inner membrane. Functionally, part of the high-affinity ATP-driven potassium transport (or Kdp) system, which catalyzes the hydrolysis of ATP coupled with the electrogenic transport of potassium into the cytoplasm. This subunit binds the periplasmic potassium ions and delivers the ions to the membrane domain of KdpB through an intramembrane tunnel. The sequence is that of Potassium-transporting ATPase potassium-binding subunit from Phocaeicola vulgatus (strain ATCC 8482 / DSM 1447 / JCM 5826 / CCUG 4940 / NBRC 14291 / NCTC 11154) (Bacteroides vulgatus).